A 188-amino-acid chain; its full sequence is Peptide methionine sulfoxide reductase MsrA (188 aa).

The segment at 1 to 25 (MEGNEKAEQKNATSEESTDIFENPG) is disordered. C37 is an active-site residue.

Belongs to the MsrA Met sulfoxide reductase family.

The enzyme catalyses L-methionyl-[protein] + [thioredoxin]-disulfide + H2O = L-methionyl-(S)-S-oxide-[protein] + [thioredoxin]-dithiol. The catalysed reaction is [thioredoxin]-disulfide + L-methionine + H2O = L-methionine (S)-S-oxide + [thioredoxin]-dithiol. In terms of biological role, has an important function as a repair enzyme for proteins that have been inactivated by oxidation. Catalyzes the reversible oxidation-reduction of methionine sulfoxide in proteins to methionine. This chain is Peptide methionine sulfoxide reductase MsrA, found in Methanosarcina acetivorans (strain ATCC 35395 / DSM 2834 / JCM 12185 / C2A).